A 676-amino-acid chain; its full sequence is Electrogenic aspartate/glutamate antiporter SLC25A12, mitochondrial (676 aa).

An N-acetylalanine modification is found at alanine 2. Positions 2–293 (AVKVHTTKRG…TLADIERIAP (292 aa)) are regulatory N-terminal domain. The Mitochondrial intermembrane segment spans residues 2–328 (AVKVHTTKRG…WLQIAESAYR (327 aa)). Aspartate 65, threonine 67, aspartate 69, leucine 71, and glutamate 76 together coordinate Ca(2+). 4 consecutive EF-hand domains span residues 65–76 (DQTKDGLISYQE), 86–121 (APDS…TIIH), 125–155 (PFNW…QFLQ), and 157–192 (LQLE…IRSH). The segment at 294 to 309 (LAEGALPYNLAELQRQ) is linker loop domain. The tract at residues 319–611 (WLQIAESAYR…RWFYIDFGGL (293 aa)) is carrier domain. Solcar repeat units follow at residues 323–415 (AESA…VRDK), 423–507 (IPLP…CKLL), and 515–603 (VGGI…LQRW). A helical membrane pass occupies residues 329–346 (FTLGSVAGAVGATAVYPI). Residues 347-389 (DLVKTRMQNQRGTGSVVGELMYKNSFDCFKKVLRYEGFFGLYR) are Mitochondrial matrix-facing. Residues 390 to 409 (GLIPQLIGVAPEKAIKLTVN) form a helical membrane-spanning segment. The Mitochondrial intermembrane portion of the chain corresponds to 410 to 432 (DFVRDKFTRRDGSIPLPAEILAG). The chain crosses the membrane as a helical span at residues 433–446 (GCAGGSQVIFTNPL). Over 447–481 (EIVKIRLQVAGEITTGPRVSALNVLQDLGLFGLYK) the chain is Mitochondrial matrix. Residues 482–501 (GAKACFLRDIPFSAIYFPVY) traverse the membrane as a helical segment. Residues 502-520 (AHCKLLLADENGHVGGINL) are Mitochondrial intermembrane-facing. A helical transmembrane segment spans residues 521 to 538 (LTAGAMAGVPAASLVTPA). The Mitochondrial matrix segment spans residues 539 to 577 (DVIKTRLQVAARAGQTTYSGVIDCFRKILREEGPSAFWK). The helical transmembrane segment at 578–597 (GTAARVFRSSPQFGVTLVTY) threads the bilayer. Topologically, residues 598–676 (ELLQRWFYID…AQPKVAAAAQ (79 aa)) are mitochondrial intermembrane. The C-terminal domain stretch occupies residues 612–674 (KPSGSEPTPK…AAAQPKVAAA (63 aa)).

Belongs to the mitochondrial carrier (TC 2.A.29) family. Homodimer (via N-terminus).

The protein resides in the mitochondrion inner membrane. The catalysed reaction is L-aspartate(in) + L-glutamate(out) + H(+)(out) = L-aspartate(out) + L-glutamate(in) + H(+)(in). The enzyme catalyses 3-sulfino-L-alanine(out) + L-glutamate(in) + H(+)(in) = 3-sulfino-L-alanine(in) + L-glutamate(out) + H(+)(out). It carries out the reaction 3-sulfino-L-alanine(out) + L-aspartate(in) = 3-sulfino-L-alanine(in) + L-aspartate(out). Its activity is regulated as follows. L-aspartate and 3-sulfino-L-alanine uptake are both inhibited by glisoxepide. In terms of biological role, mitochondrial electrogenic aspartate/glutamate antiporter that favors efflux of aspartate and entry of glutamate and proton within the mitochondria as part of the malate-aspartate shuttle. Also mediates the uptake of L-cysteinesulfinate (3-sulfino-L-alanine) by mitochondria in exchange of L-glutamate and proton. Can also exchange L-cysteinesulfinate with aspartate in their anionic form without any proton translocation. Lacks transport activity towards L-glutamine or gamma-aminobutyric acid (GABA). This Rattus norvegicus (Rat) protein is Electrogenic aspartate/glutamate antiporter SLC25A12, mitochondrial.